We begin with the raw amino-acid sequence, 333 residues long: Protein pelota homolog (333 aa).

This sequence belongs to the eukaryotic release factor 1 family. Pelota subfamily. Monomer. A divalent metal cation serves as cofactor.

It localises to the cytoplasm. May function in recognizing stalled ribosomes, interact with stem-loop structures in stalled mRNA molecules, and effect endonucleolytic cleavage of the mRNA. May play a role in the release non-functional ribosomes and degradation of damaged mRNAs. Has endoribonuclease activity. This Pyrobaculum arsenaticum (strain DSM 13514 / JCM 11321 / PZ6) protein is Protein pelota homolog.